The following is a 601-amino-acid chain: NAD-dependent malic enzyme 59 kDa isoform, mitochondrial (601 aa).

The transit peptide at 1-18 (MWRVARSAASTFRRTRRL) directs the protein to the mitochondrion. Tyr-129 acts as the Proton donor in catalysis. Arg-182 is an NAD(+) binding site. Lys-200 acts as the Proton acceptor in catalysis. 3 residues coordinate a divalent metal cation: Glu-271, Asp-272, and Asp-295. Residues Asp-295 and Asn-444 each contribute to the NAD(+) site.

It belongs to the malic enzymes family. As to quaternary structure, heterodimer of two related subunits. It depends on Mg(2+) as a cofactor. Requires Mn(2+) as cofactor.

The protein localises to the mitochondrion matrix. The catalysed reaction is (S)-malate + NAD(+) = pyruvate + CO2 + NADH. The protein is NAD-dependent malic enzyme 59 kDa isoform, mitochondrial of Solanum tuberosum (Potato).